The chain runs to 255 residues: D-aminoacyl-tRNA deacylase (255 aa).

The protein belongs to the DtdA deacylase family. As to quaternary structure, monomer. The cofactor is Zn(2+).

It carries out the reaction a D-aminoacyl-tRNA + H2O = a tRNA + a D-alpha-amino acid + H(+). It catalyses the reaction glycyl-tRNA(Ala) + H2O = tRNA(Ala) + glycine + H(+). In terms of biological role, D-aminoacyl-tRNA deacylase with broad substrate specificity. By recycling D-aminoacyl-tRNA to D-amino acids and free tRNA molecules, this enzyme counteracts the toxicity associated with the formation of D-aminoacyl-tRNA entities in vivo. The chain is D-aminoacyl-tRNA deacylase from Methanocaldococcus jannaschii (strain ATCC 43067 / DSM 2661 / JAL-1 / JCM 10045 / NBRC 100440) (Methanococcus jannaschii).